The chain runs to 186 residues: MSTPLNVVALSGGTSRPSRTLALTEAILAELAEHLHIKPHLIELGEIARPLGSALWRSELPEAVEQQLRLVEKADLLVVTTPVYRGSFTGHFKHLFDLIGQDALVDTPVLLAATGGSERHALVLDHQLRPLFSFLQALTLPIGVFASQAEMADYRVSSAALAARIRLAAERAVPLFGAHHALRKSA.

Belongs to the SsuE family.

It catalyses the reaction FMNH2 + NAD(+) = FMN + NADH + 2 H(+). In terms of biological role, involved in the dimethyl sulfide degradation pathway. Catalyzes the NADH-dependent reduction of FMN. This is NADH-dependent FMN reductase SfnE from Pseudomonas putida (Arthrobacter siderocapsulatus).